A 248-amino-acid polypeptide reads, in one-letter code: Deoxyribose-phosphate aldolase (248 aa).

The active-site Proton donor/acceptor is D117. K179 (schiff-base intermediate with acetaldehyde) is an active-site residue. The Proton donor/acceptor role is filled by K208.

Belongs to the DeoC/FbaB aldolase family. DeoC type 1 subfamily.

It localises to the cytoplasm. It carries out the reaction 2-deoxy-D-ribose 5-phosphate = D-glyceraldehyde 3-phosphate + acetaldehyde. It functions in the pathway carbohydrate degradation; 2-deoxy-D-ribose 1-phosphate degradation; D-glyceraldehyde 3-phosphate and acetaldehyde from 2-deoxy-alpha-D-ribose 1-phosphate: step 2/2. In terms of biological role, catalyzes a reversible aldol reaction between acetaldehyde and D-glyceraldehyde 3-phosphate to generate 2-deoxy-D-ribose 5-phosphate. This Thermotoga maritima (strain ATCC 43589 / DSM 3109 / JCM 10099 / NBRC 100826 / MSB8) protein is Deoxyribose-phosphate aldolase.